Reading from the N-terminus, the 367-residue chain is MGFTSRGNPSFLFFFFFFLCLSTVSAYINSTSSNNDEVRRELASGRCNWFRGNWVYDVKYPLYDPYKCPFIDPQFNCKKYGRPDNAYLKYRWQPSSCSLPRFNGLYFLRRMRGKKIMFVGDSLSTNMWQSLACLIHSWVPNTRYTLIRQKGLASLTFEEYGVTLLLYRTQFLVDLNVEKVGRVLKLDSIKQGNMWRGMDVLIFNSWHWWTHTEHIQPWDYMEDGNRLYKDMNRLVAFYKGMTTWARWVNAYVDPSKTKVFFNGVSPTHYEGKDWGEPMNSCRSQTQPFYGRKYPGGTPMAWVILNKVMRRLKKPVHWLDITGLSQLRKDAHPSAFSGNHPGNDCSHWCLPGLPDTWNLLFYSTLFSS.

Residues 7–29 traverse the membrane as a helical; Signal-anchor for type II membrane protein segment; sequence GNPSFLFFFFFFLCLSTVSAYIN. The GDS motif motif lies at 120 to 122; sequence GDS. The short motif at 343-357 is the DCXHWCLPGXXDXWN motif element; sequence DCSHWCLPGLPDTWN.

It belongs to the PC-esterase family. TBL subfamily.

It is found in the membrane. Its function is as follows. May act as a bridging protein that binds pectin and other cell wall polysaccharides. Probably involved in maintaining esterification of pectins. May be involved in the specific O-acetylation of cell wall polymers. In Arabidopsis thaliana (Mouse-ear cress), this protein is Protein trichome birefringence-like 39 (TBL39).